Reading from the N-terminus, the 448-residue chain is Extracellular serine protease (448 aa).

The first 20 residues, 1-20 (MKLSHLSLAIISAITLAACG), serve as a signal peptide directing secretion. The interval 87-109 (KELENQASDDEVDPTKTGVVGNL) is disordered.

This sequence belongs to the peptidase S17 family. The cofactor is a divalent metal cation.

In terms of biological role, this enzyme is a chymotrypsin-like serine protease. Degrades a variety of substrates present in the skin and hoof of the sheep, including elastin, keratin, fibrinogen and collagen. It seems to play an important role in the pathogenesis of sheep footrot. The polypeptide is Extracellular serine protease (prvA) (Dichelobacter nodosus (Bacteroides nodosus)).